We begin with the raw amino-acid sequence, 767 residues long: 5-methyltetrahydropteroyltriglutamate--homocysteine methyltransferase (767 aa).

Residues 17–20 (RELK) and lysine 117 contribute to the 5-methyltetrahydropteroyltri-L-glutamate site. L-homocysteine is bound by residues 442–444 (IGS) and glutamate 495. L-methionine contacts are provided by residues 442–444 (IGS) and glutamate 495. 5-methyltetrahydropteroyltri-L-glutamate-binding positions include 526–527 (RC) and tryptophan 572. Aspartate 610 is a binding site for L-homocysteine. Aspartate 610 contacts L-methionine. Glutamate 616 is a 5-methyltetrahydropteroyltri-L-glutamate binding site. Zn(2+)-binding residues include histidine 653, cysteine 655, and glutamate 677. The Proton donor role is filled by histidine 706. Residue cysteine 738 participates in Zn(2+) binding.

Belongs to the vitamin-B12 independent methionine synthase family. The cofactor is Zn(2+).

It catalyses the reaction 5-methyltetrahydropteroyltri-L-glutamate + L-homocysteine = tetrahydropteroyltri-L-glutamate + L-methionine. It participates in amino-acid biosynthesis; L-methionine biosynthesis via de novo pathway; L-methionine from L-homocysteine (MetE route): step 1/1. Functionally, catalyzes the transfer of a methyl group from 5-methyltetrahydrofolate to homocysteine resulting in methionine formation. The protein is 5-methyltetrahydropteroyltriglutamate--homocysteine methyltransferase of Bifidobacterium animalis subsp. lactis (strain AD011).